We begin with the raw amino-acid sequence, 325 residues long: Ribosomal RNA small subunit methyltransferase H (325 aa).

The disordered stretch occupies residues 1–28 (MTASQPLDQADQDSESSSAGSSAAETEH). Low complexity predominate over residues 15–24 (ESSSAGSSAA). S-adenosyl-L-methionine-binding positions include 56-58 (GGH), D82, Y110, D131, and Q138. Residues 303–325 (TDEEVQANPRSRSAKLRVAKRVE) form a disordered region. Over residues 314 to 325 (RSAKLRVAKRVE) the composition is skewed to basic residues.

It belongs to the methyltransferase superfamily. RsmH family.

It localises to the cytoplasm. It catalyses the reaction cytidine(1402) in 16S rRNA + S-adenosyl-L-methionine = N(4)-methylcytidine(1402) in 16S rRNA + S-adenosyl-L-homocysteine + H(+). Specifically methylates the N4 position of cytidine in position 1402 (C1402) of 16S rRNA. The polypeptide is Ribosomal RNA small subunit methyltransferase H (Rhodopirellula baltica (strain DSM 10527 / NCIMB 13988 / SH1)).